The primary structure comprises 257 residues: Type III pantothenate kinase (257 aa).

Position 6–13 (6–13 (DVGNTNTV)) interacts with ATP. Substrate contacts are provided by residues Tyr-102 and 109–112 (GADR). Asp-111 acts as the Proton acceptor in catalysis. Asp-131 is a binding site for K(+). Thr-134 contributes to the ATP binding site. Residue Thr-186 coordinates substrate.

Belongs to the type III pantothenate kinase family. Homodimer. Requires NH4(+) as cofactor. K(+) is required as a cofactor.

It is found in the cytoplasm. It carries out the reaction (R)-pantothenate + ATP = (R)-4'-phosphopantothenate + ADP + H(+). Its pathway is cofactor biosynthesis; coenzyme A biosynthesis; CoA from (R)-pantothenate: step 1/5. Its function is as follows. Catalyzes the phosphorylation of pantothenate (Pan), the first step in CoA biosynthesis. The protein is Type III pantothenate kinase of Leptospira borgpetersenii serovar Hardjo-bovis (strain JB197).